We begin with the raw amino-acid sequence, 376 residues long: Aspartate-semialdehyde dehydrogenase (376 aa).

NADP(+) contacts are provided by residues 11–14 (RGMV), 38–39 (TS), and Gln74. Arg103 contributes to the phosphate binding site. Residue Cys136 is the Acyl-thioester intermediate of the active site. Residue Gln163 coordinates substrate. Residues 166–167 (SG) and Pro194 contribute to the NADP(+) site. Glu242 is a substrate binding site. Lys245 contributes to the phosphate binding site. Arg273 is a substrate binding site. His280 acts as the Proton acceptor in catalysis. Gln356 contacts NADP(+).

Belongs to the aspartate-semialdehyde dehydrogenase family. As to quaternary structure, homodimer.

It carries out the reaction L-aspartate 4-semialdehyde + phosphate + NADP(+) = 4-phospho-L-aspartate + NADPH + H(+). Its pathway is amino-acid biosynthesis; L-lysine biosynthesis via DAP pathway; (S)-tetrahydrodipicolinate from L-aspartate: step 2/4. The protein operates within amino-acid biosynthesis; L-methionine biosynthesis via de novo pathway; L-homoserine from L-aspartate: step 2/3. It functions in the pathway amino-acid biosynthesis; L-threonine biosynthesis; L-threonine from L-aspartate: step 2/5. Functionally, catalyzes the NADPH-dependent formation of L-aspartate-semialdehyde (L-ASA) by the reductive dephosphorylation of L-aspartyl-4-phosphate. This is Aspartate-semialdehyde dehydrogenase from Bordetella pertussis (strain Tohama I / ATCC BAA-589 / NCTC 13251).